The following is a 37-amino-acid chain: Large ribosomal subunit protein bL36 (37 aa).

The protein belongs to the bacterial ribosomal protein bL36 family.

The chain is Large ribosomal subunit protein bL36 from Synechococcus sp. (strain RCC307).